The chain runs to 209 residues: 3-dehydroquinate dehydratase (209 aa).

3-dehydroquinate-binding positions include serine 6, glutamate 25–arginine 27, and arginine 55. The active-site Proton donor/acceptor is the histidine 109. Lysine 134 acts as the Schiff-base intermediate with substrate in catalysis. 3-dehydroquinate-binding residues include arginine 172 and glutamine 195.

Belongs to the type-I 3-dehydroquinase family. In terms of assembly, homodimer.

It carries out the reaction 3-dehydroquinate = 3-dehydroshikimate + H2O. The protein operates within metabolic intermediate biosynthesis; chorismate biosynthesis; chorismate from D-erythrose 4-phosphate and phosphoenolpyruvate: step 3/7. Involved in the third step of the chorismate pathway, which leads to the biosynthesis of aromatic amino acids. Catalyzes the cis-dehydration of 3-dehydroquinate (DHQ) and introduces the first double bond of the aromatic ring to yield 3-dehydroshikimate. The chain is 3-dehydroquinate dehydratase from Methanoregula boonei (strain DSM 21154 / JCM 14090 / 6A8).